The following is a 65-amino-acid chain: uncharacterized protein (65 aa).

This is an uncharacterized protein from Mycobacterium tuberculosis (strain ATCC 25618 / H37Rv).